The following is a 797-amino-acid chain: METALAKIPQQRQVFFLTILSLLWKSSSEAIRYSMPEETESGYMVANLAKDLGIRVGELSSRGAQIHYKGNKELLQLDAETGNLFLKEKLDRELLCGETEPCVLNFQIILENPMQFFQTELQLTDINDHSPEFPNKKMLLTIPESAHPGTVFPLKAARDSDIGSNAVQNYTVNPNLHFHVVTHSRTDGRKYPELVLDRALDREEQPELTLILTALDGGAPSRSGTTTVHIEVVDINDNSPQFVQSLYKVQVPENNPLNAFVVTVSATDLDAGVYGNVTYSLFQGYGVFQPFVIDEITGEIHLSKELDFEEISNHNIEIAATDGGGLSGKCTVAVQVLDVNDNAPELTIRKLTVLVPENSAETVVAVFSVSDSDSGDNGRMVCSIPNNIPFLLKPTFENYYTLVTEGPLDRENRAEYNITITVSDLGTPRLTTQHTITVQVSDINDNAPAFTQTSYTMFVHENNSPALHIGTISATDSDSGSNAHITYSLLPPDDPQLALDSLISINVDNGQLFALRALDYEALQSFEFYVGATDGGSPALSSQTLVRMVVLDDNDNAPFVLYPLQNASAPCTELLPRAAEPGYLITKVVAVDRDSGQNAWLSFQLLKATEPGLFSVWAHNGEVRTTRLLSERDAQKHKLLLLVKDNGDPLRSANVTLHVLVVDGFSQPYLPLAEVAQDSMQDNYDVLTLYLVIALASVSSLFLLSVVLFVGVRLCRRAREASLGDYSVPEGHFPSHLVDVSGAGTLSQSYQYEVCLNGGTRTNEFNFLKPLFPILPTQAAAAEERENAVVHNSVGFY.

The signal sequence occupies residues 1–30; that stretch reads METALAKIPQQRQVFFLTILSLLWKSSSEA. Residues 31–691 are Extracellular-facing; that stretch reads IRYSMPEETE…DNYDVLTLYL (661 aa). 5 consecutive Cadherin domains span residues 35-133, 138-242, 247-346, 351-450, and 455-560; these read MPEE…SPEF, MLLT…SPQF, YKVQ…APEL, LTVL…APAF, and YTMF…APFV. Residues Asn-169, Asn-276, and Asn-417 are each glycosylated (N-linked (GlcNAc...) asparagine). N-linked (GlcNAc...) asparagine glycosylation occurs at Asn-566. The region spanning 567 to 670 is the Cadherin 6 domain; that stretch reads ASAPCTELLP…VVDGFSQPYL (104 aa). The chain crosses the membrane as a helical span at residues 692 to 712; it reads VIALASVSSLFLLSVVLFVGV. The Cytoplasmic portion of the chain corresponds to 713–797; the sequence is RLCRRAREAS…AVVHNSVGFY (85 aa).

In terms of tissue distribution, expressed in brain.

The protein resides in the cell membrane. In terms of biological role, potential calcium-dependent cell-adhesion protein. May be involved in the establishment and maintenance of specific neuronal connections in the brain. The polypeptide is Protocadherin-3 (Pcdh3) (Rattus norvegicus (Rat)).